The following is a 322-amino-acid chain: Acetyl-coenzyme A carboxylase carboxyl transferase subunit alpha (322 aa).

Residues 30–293 (ALDISAEITR…RQALQESLRK (264 aa)) enclose the CoA carboxyltransferase C-terminal domain.

The protein belongs to the AccA family. In terms of assembly, acetyl-CoA carboxylase is a heterohexamer composed of biotin carboxyl carrier protein (AccB), biotin carboxylase (AccC) and two subunits each of ACCase subunit alpha (AccA) and ACCase subunit beta (AccD).

It localises to the cytoplasm. It carries out the reaction N(6)-carboxybiotinyl-L-lysyl-[protein] + acetyl-CoA = N(6)-biotinyl-L-lysyl-[protein] + malonyl-CoA. The protein operates within lipid metabolism; malonyl-CoA biosynthesis; malonyl-CoA from acetyl-CoA: step 1/1. Its function is as follows. Component of the acetyl coenzyme A carboxylase (ACC) complex. First, biotin carboxylase catalyzes the carboxylation of biotin on its carrier protein (BCCP) and then the CO(2) group is transferred by the carboxyltransferase to acetyl-CoA to form malonyl-CoA. This Nitrosomonas eutropha (strain DSM 101675 / C91 / Nm57) protein is Acetyl-coenzyme A carboxylase carboxyl transferase subunit alpha.